The primary structure comprises 3919 residues: MLRDLITWVLNTYLGKYLENLNSAQLSVALLSGEVELENIPIRKDALRSFNLPVEVTAGSIRKIKLQIPVRQFRTSPWCISIEGLFCIICPKNLDNWDYEKEKLQDLEYKLAVLDTAEAGWRSEKGKQMESYYFSSYNNWLKYGTNMATNIIDNIELKISDVHFRFEDIVDTGKSKICTGIKIGSLTAQSCDCDWTNGSYKMNNNEMNYKLVELKELSVYWDLLHEDIKCQSYSNQEILEKMHSTCELRSHNFIIKPICATARWKRDKCQQVIRTKDKPRVSCELLVPEVVIDISKVQRLQMLDKLSEIRQVKEVRQYRLKRPTCTVESNPIAWWKYATICHGFDFKKNEEKWLMLKENLRYMLLYKSIILNPNENLSAADKEFKAYIESDRKISDLTIMRRICFEKVFTKGFAFESQNEQGKNMLFHWFPNWMGWYANSPSTPNNEQDESLKHLEDDILVALENSLQNSSDLKSDAVFGHFSIKLLKGLVILQTEDKLNDGRNKSMEMQFNNFSAYLQLSPQLTSYTVGISLQEVYLIDKTSSDTMHNYLIKPQTGNTATPNQLVKNAALQEDILFQLQYENCNHLRFQLNIKSKGLDLIYNEDAIQWLLDFLADSNSFKYSPRNRVAKKTDFMKNWNEMFSGNEVNRKIWMFEIEIFAPRIIFLENYKVSNSLMVLLDFGKLEMRKMEVKRVIPVIESAVTENTSDDDETYLTPCSTPPASEKSGSESPTLLENPKTESFLNKNVQLEYVLHNKIYDKYLINFTNLQVLVCKYEERWQACLKTSSNFHLIDKFNINLTLEQRNIFTVDPEYPSFMLFGTCPTILIHGNEELINNCCNIMKPIIKASKEMENIYRGGNTIYASERIKNLAEDDRSRVVIEFVMDQLVIEMQSTERSIAELQIIGARAGLTKEPHETNISMSVHGLLLVDAIQSFGPDFELLVASHRHVGMDSLSGSLKHSAIVSPTSPGSPNFFDRATSPHMITKAVQNIKMGDRSTEFCDDEDSTALISVDIKIVPPNESNSMQLHTTSITFNSLDIIANQDTIIEILNFAKRTLLAQNIFPSESPESPKEATEAPVDVVDQVDHKSHNEIFFDFFRLNILLLYTIKRDKFNVGRKVGTVTLTEAKINASFQSDLSIIGSLGGIQVIDITSEAFCHPRILSVGRDQILRASDTNKQTVLSQLSNEIYSNNYNEETKSDESDAISFQSHWSDKTTCTFQMRMASASYTHCPRFLRDVNACITYFKRSLREFATSIGNKATDMAKEFVQQVRAVEQIGPVYPQRNRQDNWLDIIISSPIIILPISNTSTNVLIANLGKISCSNAVKCDSDEFNESYTIEIKNTYVYSLNIDEGEYSFNVHPAKNKDAIPILHDTAITLQLYAGYSDDNDEDKQLNRFSIKGSMVEALKVSLNRKQYELLLESIRYATNFSNEVLNESDELDQNGDIEPTANIDAESIISTTIQFSVPVFQINLQNEYHNDLINLTFKNFNVKHISKGFDKDVEVVLKSVLMEDLKSDLTSPFRNMVTSVDLEQKIKKNEMTSSSCPDLPSYCNSLKNRSSSVPSCFYNHMQVKVFGGDQKYTSSNKNELGKKKESQTLVIYKSHTGRSAQNGKLEQTSSIQFNCLNLAICVERWYTIFDFFGLVSVDNVNEKYPEEMKLVEKHIDKVCSKLKVSIRSFNFTLIRNESLLSRVNVSNAVFMILQDPYSKIVEGCLGSVSVNDLTKYGNIYKQKFLTSGTEALNFVYKKKLVDLEALNTLDTDSTLRINMSAVHYIHTKRFSTELHVFVKDLLQLQTPVIRKLKKHGSEQNMRPSKMKLVIQADSPVIVLPSSYNRNEVIIAYLGQFSLKNSFHFASDNNIISKMSATPSKDEILDVMRIDLVNINLFSGERSSMKAKADQEKDRIIIADMNFLRLGQPFFNESCFLHLQLERNLSADAHRVCPDISVQGTFSKLSGIINIQQYKLIRSFLNNNIGEQTDDIYMNYHNNSCTSIERLSTINLMPKNEVSKIVSILISIRILLEDVSLLLALNTSQSAAIEPLACIHFLKSTLEIDLFSDGSQDIDLISSNILIVDERNESDKSNENVFKNILEPSKKEVRIENSVQVEVHCRKKATFSKYTIMLNNMRVFALLSFLDQLKSYLQEDSPAPVVNNAANQIAQKPQIDTSISTEYVVNITDSEIIFAEECSRLDSNAIILKSTTVICYKPNSNIVPLSLDINHLEIFSCTLDAEEESALSIIDPFTLIIELRSNCLNILIQKHLNIRLSYVDVKLFSRMARLLPTQTSRPKNVISKADSDLEKAAPLVAMGFEISDCLYAMQINNWRINDAAIWLSQQKQNTYRNPALEMKTAVVDASLISVFIIDDCMDADVPLLEVSLSKFLLNFTFQTQDPNPKETNIRHYSLGNIDTEVSVNYYNRRLSGWEPVAETWESNLNWKYTKGHLDNKKRFEIGISSKQMLKLNVTSTFIELFHMVLKNWTNDFNDNGAKNFRQRSPFIPFALQNLSGTPLLFKPIYAPLGDLTRSDLQQVELIKNWYSVQPNETKTFDFSQKSKLRHVHSHQLNLHQIFVQIHGWTLIGPISVDKVGMFFRTTKLDSQFLTKSRIVFDISLIGSAQKLIKVKSSLGVINKLDRNVFLKMTLKGTHSDGLSSISVIKPNDELSVPLKFIDASLYVAHNTSESDAYEDTGFSNEEILWKACGKDDTRQLLAGYDTNKSILYTFVNISREIYHCKEQNLPGHKITLLPPLKINNMLCCDLMFKIHEHATGRINSSESVNIYNVNICQPLNLSITLDNFQLSGQLKIPVSHRGVIEPKLKLIDIQKRELHVRVSIQSVPGKGMELYISAPVWIINKTGLPLIYKQEGTSHTAAGQFEEHETARQVAPLMFSFSDQEGSPALVLRLGKAYGSNNMWCKSFSTHKDLADRDLRAENTKGSYAIGISVRRGRGLYACTTFVTLSPRFHLHNRSGYKLEFMQLCDIVNYDRPDPRKIISAPVDCNFAFHWPNWDQEQIICVRIPEIECCCWSKGIPIKDVQSLYINVRNEWGEMFFLRLEIISKDATFILLFTDARTLPPPIRIDNCSEVVINFSQLRSKPVWITPVRPQSSLSYVMDDPLGQQILLMEAPGGNMIEFPINNKNNIKKTLTYTNFIYIAFQGTFERSNEEENTHRQLVLGVRGKKVVIVEKNSGDRSQLWLMNSNGQLEHEGSTPPIQTNDANAVRLVLDLEKAPNPMEFTNLVVRTPNKQRVTTQTWRFENGRLMCHANMCVQSRFGESGLKPNYEAVVGRTENRASSSKQIPIGQHIVAQKLRPGSGQLELSTKMDGPISTIEICDIKIKQNSVFLTPDLLWMHASLNNRQITDKGKVSFVHEYLINVELVKGIGISIIARKPCEEIMFISLDHINCDIVQSALENSLDLNIAYIQIDNQLLDAVSPIALHTQTSNDLEETQNAVVLKLKMLPSPNKNAIIFKYLTLDLKPSTASLEEKLILKVASFLGYGKINRQNLSVQYQFENTDDKPFLQDMKRYYFENLSIGATQVRLSAFTSSKLPVELHETKKALGLTLIKFEDALIELDRYSDKLHFETMDVYRKELKKHYINQVKWHAAAILGSVDFLGNPLGFANDLSEGVSGLIFEGSVKSLVKNVTHGISNSTAKLTETLSDSLGKVVLDDHDNETRQRILELQSNTSGGHLAAGLKGLGFGLLGGVTSIVRHTYDGATSDGVPGFLSGLGKGLVGTVTKPIIGVLDLASETASAVRETSRDSHRNAPERKRLPRCVTGAPGGLLPLYSNRQSKGQQYLYLINQKNFSEKIISYEPNLWSDKEARLRLLVSTEYVRIFSLSDANPTIMFECHVSEILSCHPVVTNAGTTPTTSSRASASHYIEISTNLPKITRPRIRCRSEECAEAASRCINYAKSVFDEREHAVL.

Residues 4–114 (DLITWVLNTY…QDLEYKLAVL (111 aa)) form the Chorein N-terminal domain. A disordered region spans residues 706 to 736 (TSDDDETYLTPCSTPPASEKSGSESPTLLEN). Residues 2292–2334 (KADSDLEKAAPLVAMGFEISDCLYAMQINNWRINDAAIWLSQQ) form the UBA domain. Residues 2837-3113 (ELYISAPVWI…YVMDDPLGQQ (277 aa)) form the SHR-BD domain. The disordered stretch occupies residues 3749–3768 (VRETSRDSHRNAPERKRLPR). Residues 3751–3764 (ETSRDSHRNAPERK) are compositionally biased toward basic and acidic residues.

Belongs to the VPS13 family. In terms of tissue distribution, expressed in intestinal cells (at protein level).

The protein localises to the cytoplasm. Its subcellular location is the lysosome. Functionally, mediates the transfer of lipids between membranes at organelle contact sites. Functions in promoting mitochondrial clearance by mitochondrial autophagy (mitophagy), also possibly by positively regulating mitochondrial fission. Mitophagy plays an important role in regulating cell health and mitochondrial size and homeostasis. In Drosophila melanogaster (Fruit fly), this protein is Intermembrane lipid transfer protein Vps13D.